The sequence spans 393 residues: Protein TsgA (393 aa).

12 helical membrane passes run 11 to 31 (WISFLSYALTGALVIVTGMVM), 51 to 71 (FLNAGILISIFLNAWLMEIIP), 78 to 98 (FGFILMVLAVAGLMFSHSLAL), 101 to 121 (AAMFVLGLVSGITMSIGTFLI), 134 to 154 (LLFTDSFFSMAGMIFPMVAAF), 162 to 182 (WYWVYACIGLVYLAIFILTFG), 206 to 226 (IGVLFLAVAALCYILGQLGFI), 245 to 265 (ALVSDFWMSYMFGMWAFSFIL), 273 to 293 (ILTVLAGMAAVLMYLFITGTQ), 298 to 318 (WFILTLGFFSSAIYTSIITLG), 332 to 352 (FILTCGTIGTMLTFVVTGPIV), and 361 to 381 (LLTANGLYAVVFVMCFALGFV).

The protein belongs to the major facilitator superfamily. TsgA family.

It is found in the cell inner membrane. This is Protein TsgA from Salmonella paratyphi B (strain ATCC BAA-1250 / SPB7).